The chain runs to 343 residues: Calcium/calmodulin-dependent protein kinase type 1B (343 aa).

The Protein kinase domain occupies Y15–I270. ATP-binding positions include L21–V29 and K44. Residue D136 is the Proton acceptor of the active site. The calmodulin-binding stretch occupies residues K290–R311. A disordered region spans residues G314–W343. S338 carries the post-translational modification Phosphoserine.

It belongs to the protein kinase superfamily. CAMK Ser/Thr protein kinase family. CaMK subfamily. In terms of tissue distribution, expressed at highest levels in adult brain, and expressed in embryo. In the adult brain detected at high levels in the anterior olfactory nuclei, piriform cortex, septal nuclei, bed nuclei of the stria terminalis, hippocampal pyramidal cells, dentate granule cells, amygdala, hypothalamic nuclei, parabrachial nucleus, and nucleus of the solitary tract. Expressed at lower levels in adult ovary and heart and at very low levels in testis, lung and muscle.

The protein resides in the cytoplasm. Its subcellular location is the nucleus. The enzyme catalyses L-seryl-[protein] + ATP = O-phospho-L-seryl-[protein] + ADP + H(+). The catalysed reaction is L-threonyl-[protein] + ATP = O-phospho-L-threonyl-[protein] + ADP + H(+). With respect to regulation, activated by Ca(2+)/calmodulin. Its function is as follows. Calcium/calmodulin-dependent protein kinase belonging to a proposed calcium-triggered signaling cascade. In vitro phosphorylates CREB1 and SYN1/synapsin I. Phosphorylates and activates CAMK1. The chain is Calcium/calmodulin-dependent protein kinase type 1B (Pnck) from Mus musculus (Mouse).